A 230-amino-acid polypeptide reads, in one-letter code: Protein FAM3A (230 aa).

The N-terminal stretch at 1 to 33 (MRLAGPLRIVALVVSVGLTWIVVSILLGGPGSG) is a signal peptide. Disulfide bonds link cysteine 59/cysteine 87 and cysteine 65/cysteine 222. The GG-type lectin domain occupies 68 to 226 (EHLAFRVVSG…LEMEGCIPRR (159 aa)).

This sequence belongs to the FAM3 family.

It is found in the secreted. The protein is Protein FAM3A (FAM3A) of Pongo abelii (Sumatran orangutan).